The primary structure comprises 989 residues: Translation initiation factor IF-2 (989 aa).

Disordered regions lie at residues 43-219 (KRRR…LQAR) and 234-379 (EARR…GGAR). The span at 72 to 87 (NTPNKDTAVTQTATKN) shows a compositional bias: polar residues. The span at 105–146 (PKPVAAEATAQETSKAAPAAAQPVAEKEAAAPASAEAAKSAA) shows a compositional bias: low complexity. The segment covering 149–159 (VTDRGAKKTTE) has biased composition (basic and acidic residues). Positions 160 to 171 (KNGANASGNRPS) are enriched in polar residues. Residues 234-293 (EARRREDRLKQEADLEEQRRIEEKRRLEAEAKVEAEKQAALKEKEKAEAKARAKAEKEAK) show a composition bias toward basic and acidic residues. Residues 294–303 (AAQAKTAGAA) show a composition bias toward low complexity. Positions 342 to 361 (PRREAPRPAMRDRKGEDRRQ) are enriched in basic and acidic residues. Positions 489-659 (SRPPVVTIMG…LLQAEMLELK (171 aa)) constitute a tr-type G domain. A G1 region spans residues 498–505 (GHVDHGKT). GTP is bound at residue 498 to 505 (GHVDHGKT). Residues 523-527 (GITQH) form a G2 region. The interval 545-548 (DTPG) is G3. Residues 545-549 (DTPGH) and 599-602 (NKMD) each bind GTP. The G4 stretch occupies residues 599–602 (NKMD). Positions 635-637 (SAA) are G5.

The protein belongs to the TRAFAC class translation factor GTPase superfamily. Classic translation factor GTPase family. IF-2 subfamily.

It is found in the cytoplasm. In terms of biological role, one of the essential components for the initiation of protein synthesis. Protects formylmethionyl-tRNA from spontaneous hydrolysis and promotes its binding to the 30S ribosomal subunits. Also involved in the hydrolysis of GTP during the formation of the 70S ribosomal complex. The chain is Translation initiation factor IF-2 from Zymomonas mobilis subsp. mobilis (strain ATCC 31821 / ZM4 / CP4).